Here is a 645-residue protein sequence, read N- to C-terminus: 1,4-alpha-glucan branching enzyme GlgB (645 aa).

D309 serves as the catalytic Nucleophile. The active-site Proton donor is the E352. Residues 619–645 form a disordered region; it reads VKTRKGSKKQDGSKTKVRSNVTSRGKR. A compositionally biased stretch (polar residues) spans 636–645; it reads RSNVTSRGKR.

This sequence belongs to the glycosyl hydrolase 13 family. GlgB subfamily. Monomer.

It catalyses the reaction Transfers a segment of a (1-&gt;4)-alpha-D-glucan chain to a primary hydroxy group in a similar glucan chain.. The protein operates within glycan biosynthesis; glycogen biosynthesis. In terms of biological role, catalyzes the formation of the alpha-1,6-glucosidic linkages in glycogen by scission of a 1,4-alpha-linked oligosaccharide from growing alpha-1,4-glucan chains and the subsequent attachment of the oligosaccharide to the alpha-1,6 position. This is 1,4-alpha-glucan branching enzyme GlgB from Bacillus cereus (strain G9842).